The sequence spans 533 residues: Probable DNA ligase (533 aa).

Glu211 provides a ligand contact to ATP. Lys213 functions as the N6-AMP-lysine intermediate in the catalytic mechanism. Arg218, Arg233, Glu262, Phe302, Arg374, and Lys380 together coordinate ATP. Positions 512 to 533 (LAGEAAEKGQAEGGGEELEDDG) are disordered.

Belongs to the ATP-dependent DNA ligase family. The cofactor is Mg(2+).

It catalyses the reaction ATP + (deoxyribonucleotide)n-3'-hydroxyl + 5'-phospho-(deoxyribonucleotide)m = (deoxyribonucleotide)n+m + AMP + diphosphate.. Functionally, DNA ligase that seals nicks in double-stranded DNA during DNA replication, DNA recombination and DNA repair. This is Probable DNA ligase from Sorangium cellulosum (strain So ce56) (Polyangium cellulosum (strain So ce56)).